The sequence spans 237 residues: Thrombin-like enzyme agkihpin-1 (237 aa).

A propeptide is located at residue Met-1. Residues 2–228 (ILGDDECNIN…HLDWIENIIA (227 aa)) enclose the Peptidase S1 domain. Cys-27 and Cys-43 are oxidised to a cystine. Catalysis depends on His-42, which acts as the Charge relay system. A glycan (N-linked (GlcNAc...) asparagine) is linked at Asn-80. Asp-87 (charge relay system) is an active-site residue. Cystine bridges form between Cys-119–Cys-189, Cys-151–Cys-168, and Cys-179–Cys-204. Ser-183 serves as the catalytic Charge relay system.

The protein belongs to the peptidase S1 family. Snake venom subfamily. In terms of tissue distribution, expressed by the venom gland.

The protein resides in the secreted. With respect to regulation, the hydrolysis of TAMe (tosyl-arginine methyl ester) substrate is activated by Ca(2+), Fe(3+), Mg(2+) and Zn(2+), and inhibited by EDTA, PMSF and DTT. Thrombin-like enzyme that shows fibrinogenolytic activity against bovine fibrinogen alpha and beta chains, but not gamma chain. Hydrolyzes fibrin. Enhances ADP-induced human platelet aggregation. Has arginine esterase activity for TAMe (tosyl-arginine methyl ester) substrate. Reduces thrombin-induced thrombosis. Does not have hemorrhagic activity. Reduces the motility of human liver cancer HepG2 cells in a wound-healing assay. The protein is Thrombin-like enzyme agkihpin-1 of Gloydius halys (Chinese water mocassin).